The chain runs to 355 residues: Ubiquinone biosynthesis protein COQ4 homolog, mitochondrial (355 aa).

The Zn(2+) site is built by histidine 134, aspartate 135, histidine 138, and glutamate 150.

Belongs to the COQ4 family. In terms of assembly, component of a multi-subunit COQ enzyme complex. Zn(2+) serves as cofactor.

It is found in the mitochondrion inner membrane. The enzyme catalyses a 4-hydroxy-3-methoxy-5-(all-trans-polyprenyl)benzoate + H(+) = a 2-methoxy-6-(all-trans-polyprenyl)phenol + CO2. Its pathway is cofactor biosynthesis; ubiquinone biosynthesis. Lyase that catalyzes the C1-decarboxylation of 4-hydroxy-3-methoxy-5-(all-trans-polyprenyl)benzoic acid into 2-methoxy-6-(all-trans-polyprenyl)phenol during ubiquinone biosynthesis. The chain is Ubiquinone biosynthesis protein COQ4 homolog, mitochondrial from Plasmodium knowlesi (strain H).